Reading from the N-terminus, the 90-residue chain is Putative ATPase inhibitor, mitochondrial (90 aa).

The stretch at 42–89 forms a coiled coil; it reads ESREKAKEDFFVHQHEIEQLRKLKESLKLHREELDELESRVDKKMKSN.

Belongs to the ATPase inhibitor family.

It is found in the mitochondrion. In terms of biological role, forms a one-to-one complex with ATPase to inhibit the enzyme activity completely. The polypeptide is Putative ATPase inhibitor, mitochondrial (inh1) (Schizosaccharomyces pombe (strain 972 / ATCC 24843) (Fission yeast)).